Reading from the N-terminus, the 387-residue chain is Protein adenylyltransferase VopS (387 aa).

ATP contacts are provided by residues isoleucine 76–threonine 77, leucine 122–serine 124, glycine 353–glycine 355, and arginine 359. In terms of domain architecture, Fido spans leucine 278–lysine 387.

The protein localises to the secreted. It carries out the reaction L-tyrosyl-[protein] + ATP = O-(5'-adenylyl)-L-tyrosyl-[protein] + diphosphate. The catalysed reaction is L-threonyl-[protein] + ATP = 3-O-(5'-adenylyl)-L-threonyl-[protein] + diphosphate. Adenylyltransferase involved in virulence by mediating the addition of adenosine 5'-monophosphate (AMP) to specific threonine residue of host Rho GTPases RhoA, Rac and Cdc42. The resulting AMPylation prevents the interaction of Rho GTPases with downstream effectors, thereby inhibiting actin assembly in infected cells. The protein is Protein adenylyltransferase VopS (vopS) of Vibrio parahaemolyticus serotype O3:K6 (strain RIMD 2210633).